The sequence spans 428 residues: Hemagglutinin-esterase (428 aa).

The first 19 residues, 1-19, serve as a signal peptide directing secretion; it reads MCIAMAPRTLLLLIXCQLV. The esterase domain 1 stretch occupies residues 9-129; it reads TLLLLIXCQL…DNKRWMGNKA (121 aa). Residues 20 to 404 are Virion surface-facing; the sequence is FGFNEPLNIV…PVCIYDPLPV (385 aa). Serine 42 (nucleophile) is an active-site residue. Residues cysteine 46 and cysteine 67 are joined by a disulfide bond. Residues asparagine 91, asparagine 149, asparagine 193, asparagine 243, and asparagine 313 are each glycosylated (N-linked (GlcNAc...) asparagine; by host). A disulfide bridge links cysteine 115 with cysteine 164. Positions 130–278 are receptor binding; sequence RFYARVYEKM…GNYKAVSLEY (149 aa). 2 disulfides stabilise this stretch: cysteine 199–cysteine 288 and cysteine 207–cysteine 261. Positions 279 to 392 are esterase domain 2; that stretch reads LLSLPSKAIC…HCPTAANIGY (114 aa). Cysteine 319 and cysteine 324 are oxidised to a cystine. N-linked (GlcNAc...) asparagine; by host glycans are attached at residues asparagine 328 and asparagine 332. Catalysis depends on charge relay system residues aspartate 339 and histidine 342. Asparagine 357 and asparagine 371 each carry an N-linked (GlcNAc...) asparagine; by host glycan. Cysteine 360 and cysteine 384 are joined by a disulfide. Residues 405–425 traverse the membrane as a helical segment; sequence ILLGVLLGIAVLIIVFLNVLF. The Intravirion portion of the chain corresponds to 426-428; that stretch reads YDG.

It belongs to the influenza type C/coronaviruses hemagglutinin-esterase family. Homodimer; disulfide-linked. Forms a complex with the M protein in the pre-Golgi. Associates then with S-M complex to form a ternary complex S-M-HE. N-glycosylated in the RER. In terms of processing, N-glycosylated in the host RER.

Its subcellular location is the virion membrane. The protein localises to the host cell membrane. The enzyme catalyses N-acetyl-9-O-acetylneuraminate + H2O = N-acetylneuraminate + acetate + H(+). It carries out the reaction N-acetyl-4-O-acetylneuraminate + H2O = N-acetylneuraminate + acetate + H(+). Its function is as follows. Structural protein that makes short spikes at the surface of the virus. Contains receptor binding and receptor-destroying activities. Mediates de-O-acetylation of N-acetyl-4-O-acetylneuraminic acid, which is probably the receptor determinant recognized by the virus on the surface of erythrocytes and susceptible cells. This receptor-destroying activity is important for virus release as it probably helps preventing self-aggregation and ensures the efficient spread of the progeny virus from cell to cell. May serve as a secondary viral attachment protein for initiating infection, the spike protein being the major one. May become a target for both the humoral and the cellular branches of the immune system. The polypeptide is Hemagglutinin-esterase (Mus musculus (Mouse)).